Reading from the N-terminus, the 287-residue chain is ATP synthase gamma chain (287 aa).

Belongs to the ATPase gamma chain family. In terms of assembly, F-type ATPases have 2 components, CF(1) - the catalytic core - and CF(0) - the membrane proton channel. CF(1) has five subunits: alpha(3), beta(3), gamma(1), delta(1), epsilon(1). CF(0) has three main subunits: a, b and c.

The protein resides in the cell membrane. Its function is as follows. Produces ATP from ADP in the presence of a proton gradient across the membrane. The gamma chain is believed to be important in regulating ATPase activity and the flow of protons through the CF(0) complex. The protein is ATP synthase gamma chain of Wolbachia sp. subsp. Drosophila simulans (strain wRi).